Here is a 227-residue protein sequence, read N- to C-terminus: Cytochrome c oxidase subunit 2 (227 aa).

The Mitochondrial intermembrane segment spans residues 1–14 (MAYPMQLGFQDATS). Residues 15-45 (PIMEELLHFHDHTLMIVFLISSLVLYIISLM) traverse the membrane as a helical segment. Residues 46 to 59 (LTTKLTHTSTMDAQ) are Mitochondrial matrix-facing. Residues 60-87 (EVETIWTILPAIILIMIALPSLRILYMM) traverse the membrane as a helical segment. At 88–227 (DEINNPSLTV…YFEKWSASML (140 aa)) the chain is on the mitochondrial intermembrane side. Positions 196, 198, 200, 204, and 207 each coordinate Cu cation. Glu198 is a Mg(2+) binding site. At Tyr218 the chain carries Phosphotyrosine.

This sequence belongs to the cytochrome c oxidase subunit 2 family. In terms of assembly, component of the cytochrome c oxidase (complex IV, CIV), a multisubunit enzyme composed of 14 subunits. The complex is composed of a catalytic core of 3 subunits MT-CO1, MT-CO2 and MT-CO3, encoded in the mitochondrial DNA, and 11 supernumerary subunits COX4I, COX5A, COX5B, COX6A, COX6B, COX6C, COX7A, COX7B, COX7C, COX8 and NDUFA4, which are encoded in the nuclear genome. The complex exists as a monomer or a dimer and forms supercomplexes (SCs) in the inner mitochondrial membrane with NADH-ubiquinone oxidoreductase (complex I, CI) and ubiquinol-cytochrome c oxidoreductase (cytochrome b-c1 complex, complex III, CIII), resulting in different assemblies (supercomplex SCI(1)III(2)IV(1) and megacomplex MCI(2)III(2)IV(2)). Found in a complex with TMEM177, COA6, COX18, COX20, SCO1 and SCO2. Interacts with TMEM177 in a COX20-dependent manner. Interacts with COX20. Interacts with COX16. It depends on Cu cation as a cofactor.

The protein resides in the mitochondrion inner membrane. The enzyme catalyses 4 Fe(II)-[cytochrome c] + O2 + 8 H(+)(in) = 4 Fe(III)-[cytochrome c] + 2 H2O + 4 H(+)(out). Its function is as follows. Component of the cytochrome c oxidase, the last enzyme in the mitochondrial electron transport chain which drives oxidative phosphorylation. The respiratory chain contains 3 multisubunit complexes succinate dehydrogenase (complex II, CII), ubiquinol-cytochrome c oxidoreductase (cytochrome b-c1 complex, complex III, CIII) and cytochrome c oxidase (complex IV, CIV), that cooperate to transfer electrons derived from NADH and succinate to molecular oxygen, creating an electrochemical gradient over the inner membrane that drives transmembrane transport and the ATP synthase. Cytochrome c oxidase is the component of the respiratory chain that catalyzes the reduction of oxygen to water. Electrons originating from reduced cytochrome c in the intermembrane space (IMS) are transferred via the dinuclear copper A center (CU(A)) of subunit 2 and heme A of subunit 1 to the active site in subunit 1, a binuclear center (BNC) formed by heme A3 and copper B (CU(B)). The BNC reduces molecular oxygen to 2 water molecules using 4 electrons from cytochrome c in the IMS and 4 protons from the mitochondrial matrix. The sequence is that of Cytochrome c oxidase subunit 2 (MT-CO2) from Ovis aries (Sheep).